The primary structure comprises 1172 residues: MGLHLTVPGLRRDGRGVQSNSHDTSSKTTADISRCPQHTDAGLQRAATPGISRLLGISSRSVTLTKPRSATRGNSRYHWVPAAAGWTVGVIATLSLLASVSPLIRWIIKVPREFINDYLFNFPDTNFAWSFVLALLAAALTARKRIAWLVLLANMVLAAVVNAAEIAAGGNTAAESFGENLGFAVHVVAIVVLVLGYREFWAKVRRGALFRAAAVWLAGAVVGIVASWGLVELFPGSLAPDERLGYAANRVVGFALADPDLFTGRPHVFLNAIFGLFGAFALIGAAIVLFLSQRADNALTGEDESAIRGLLDLYGKDDSLGYFATRRDKSVVFASSGRACITYRVEVGVCLASGDPVGDHRAWPQAVDAWLRLCQTYGWAPGVMGASSQGAQTYREAGLTALELGDEAILRPADFKLSGPEMRGVRQAVTRARRAGLTVRIRRHRDIAEDEMAQTITRADSWRDTETERGFSMALGRLGDPADSDCLLVEAIDPHNQVLAMLSLVPWGTTGVSLDLMRRSPQSPNGTIELMVSELALHAESLGITRISLNFAVFRAAFEQGAQLGAGPVARLWRGLLVFFSRWWQLETLYRSNMKYQPEWVPRYACYEDARVIPRVGVASVIAEGFLVLPFSRRNRVHTGHHPAVPERLAATGLLHHDGSAPDVSGLRQVGLTNGDGVERRLPEQVRVRFDKLEKLRSSGIDAFPVGRPPSHTVAQALAADHQASVSVSGRIMRIRNYGGVLFAQLRDWSGEMQVLLDNSRLDQGCAAEFNAATDLGDLVEMTGHMGASKTGTPSLIVSGWRLIGKCLRPLPNKWKGLLDPEARVRTRYLDLAVNAESRALITARSSVLRAVRETLFAKGFVEVETPILQQLHGGATARPFVTHINTYSMDLFLRIAPELYLKRLCVGGVERVFELGRAFRNEGVDFSHNPEFTLLEAYQAHAGYLEWIDGCRELIQNAAQAANGAPIAMRPRTDKGSDGTRHHLEPVDISGIWPVRTVHDAISEALGERIDADTGLTTLRKLCDAAGVPYRTQWDAGAVVLELYEHLVECRTEQPTFYIDFPTSVSPLTRPHRSKRGVAERWDLVAWGIELGTAYSELTDPVEQRRRLQEQSLLAAGGDPEAMELDEDFLQAMEYAMPPTGGLGMGIDRVVMLITGRSIRETLPFPLAKPH.

The interval 1–34 is disordered; it reads MGLHLTVPGLRRDGRGVQSNSHDTSSKTTADISR. The interval 1 to 663 is phosphatidylglycerol lysyltransferase; the sequence is MGLHLTVPGL…LLHHDGSAPD (663 aa). Residues 17–31 are compositionally biased toward polar residues; it reads VQSNSHDTSSKTTAD. The next 7 helical transmembrane spans lie at 80–100, 122–142, 146–166, 177–197, 214–234, 272–292, and 612–632; these read VPAAAGWTVGVIATLSLLASV, FPDTNFAWSFVLALLAAALTA, IAWLVLLANMVLAAVVNAAEI, FGENLGFAVHVVAIVVLVLGY, AVWLAGAVVGIVASWGLVELF, AIFGLFGAFALIGAAIVLFLS, and VIPRVGVASVIAEGFLVLPFS. Residues 664-1172 are lysine--tRNA ligase; it reads VSGLRQVGLT…TLPFPLAKPH (509 aa). The OB DNA-binding region spans 726–804; that stretch reads VSVSGRIMRI…SLIVSGWRLI (79 aa). Residues Asp-1084 and Glu-1091 each coordinate Mg(2+).

The protein in the N-terminal section; belongs to the LPG synthetase family. In the C-terminal section; belongs to the class-II aminoacyl-tRNA synthetase family. Mg(2+) is required as a cofactor.

The protein resides in the cell membrane. It carries out the reaction tRNA(Lys) + L-lysine + ATP = L-lysyl-tRNA(Lys) + AMP + diphosphate. It catalyses the reaction L-lysyl-tRNA(Lys) + a 1,2-diacyl-sn-glycero-3-phospho-(1'-sn-glycerol) = a 1,2-diacyl-sn-glycero-3-phospho-1'-(3'-O-L-lysyl)-sn-glycerol + tRNA(Lys). Catalyzes the production of L-lysyl-tRNA(Lys)transfer and the transfer of a lysyl group from L-lysyl-tRNA(Lys) to membrane-bound phosphatidylglycerol (PG), which produces lysylphosphatidylglycerol (LPG), one of the components of the bacterial membrane with a positive net charge. LPG synthesis contributes to the resistance to cationic antimicrobial peptides (CAMPs) and likely protects M.tuberculosis against the CAMPs produced by competiting microorganisms (bacteriocins). In fact, the modification of anionic phosphatidylglycerol with positively charged L-lysine results in repulsion of the peptides. This is Lysylphosphatidylglycerol biosynthesis bifunctional protein LysX (lysX) from Mycobacterium bovis (strain BCG / Pasteur 1173P2).